The chain runs to 179 residues: Probable splicing factor, arginine/serine-rich 6 (179 aa).

One can recognise an RRM domain in the interval 3 to 76; it reads AKVYVGGLPS…VRARVELSTG (74 aa). The tract at residues 75–179 is disordered; sequence TGQRRGGGGR…RSRSRSASPH (105 aa). Residues 78-93 show a composition bias toward gly residues; that stretch reads RRGGGGRGGGFGGRGG. Over residues 94-160 the composition is skewed to basic and acidic residues; it reads GGRDRSPYRG…RSPQERDRSH (67 aa). Residues 161-173 are compositionally biased toward basic residues; it reads SKSRSRSRSRSRS.

It belongs to the splicing factor SR family. Extensively phosphorylated on serine residues in the RS domain.

It is found in the nucleus. Plays a functionally redundant role in shifting germ cell sexual differentiation in hermaprodites. Required for the development of somatic gonad structures and for progression from larval stage to adulthood. In Caenorhabditis elegans, this protein is Probable splicing factor, arginine/serine-rich 6 (rsp-6).